A 140-amino-acid chain; its full sequence is Myelodysplastic syndrome 2 translocation-associated protein (140 aa).

In terms of tissue distribution, highly expressed in peripheral blood leukocytes, spleen, thymus, kidney, pancreas and lung.

The sequence is that of Myelodysplastic syndrome 2 translocation-associated protein (MDS2) from Homo sapiens (Human).